A 98-amino-acid polypeptide reads, in one-letter code: Protein Asterix (98 aa).

The next 2 helical transmembrane spans lie at 32–52 (LFSI…CLWV) and 78–98 (VSLS…NLFV).

It belongs to the Asterix family.

The protein localises to the membrane. This is Protein Asterix from Dictyostelium discoideum (Social amoeba).